Consider the following 426-residue polypeptide: MRLSKYYIPTLKETPTDVSVTSHVYSLRSGLIRQVASGIYAWLPLGLKVLKNIENVIKEEMNKSGILEVLMPLIQPASLWQESGRYNDYGSEMLRIKDRNNREMVFGPTHEEVVTDLLRTTLTSYKNLPLILYQVQWKFRDELRPRYGIMRCREFLMKDAYSFDKDFNSAIESYNLMFKVYIQIFRRLGLTPIAVKADSGPIGGNLSHEFHILANSGESTLYYDQDIINLINNDNIDIEKIKNTYTAADDLHNSETCPIPASNIKTSKGIEIGHIFYLGDKYSKTMNAAFSQNNETQLLHMGCYGIGVSRLVGAIIEVSHDNNGIIWPEEIAPFKFSLVNVFSANKECRNISENLYAKLDSNDVLYDDTEDSTGIKFSRMDLLGMPWQVIIGKTTIEHGLIEVRQRSSKKSLLMSTEQFLNNFKKS.

This sequence belongs to the class-II aminoacyl-tRNA synthetase family. ProS type 2 subfamily. As to quaternary structure, homodimer.

Its subcellular location is the cytoplasm. The enzyme catalyses tRNA(Pro) + L-proline + ATP = L-prolyl-tRNA(Pro) + AMP + diphosphate. Catalyzes the attachment of proline to tRNA(Pro) in a two-step reaction: proline is first activated by ATP to form Pro-AMP and then transferred to the acceptor end of tRNA(Pro). This Ehrlichia ruminantium (strain Gardel) protein is Proline--tRNA ligase.